The primary structure comprises 332 residues: Fructose-1,6-bisphosphatase class 1 (332 aa).

Positions 92, 113, 115, and 116 each coordinate Mg(2+). Substrate is bound by residues D116–S119, N209, Y242, and K272. E278 is a Mg(2+) binding site.

Belongs to the FBPase class 1 family. In terms of assembly, homotetramer. It depends on Mg(2+) as a cofactor.

The protein resides in the cytoplasm. It carries out the reaction beta-D-fructose 1,6-bisphosphate + H2O = beta-D-fructose 6-phosphate + phosphate. Its pathway is carbohydrate biosynthesis; Calvin cycle. In Prosthecochloris aestuarii (strain DSM 271 / SK 413), this protein is Fructose-1,6-bisphosphatase class 1.